Consider the following 728-residue polypeptide: Polyphosphate kinase (728 aa).

N57 lines the ATP pocket. 2 residues coordinate Mg(2+): R408 and R438. H468 functions as the Phosphohistidine intermediate in the catalytic mechanism. Positions 501, 597, and 625 each coordinate ATP. The segment at 694-728 (VQRRPASPEQSQSSQAIFTAQAIAETTEDPELRSV) is disordered. Positions 695-709 (QRRPASPEQSQSSQA) are enriched in low complexity.

This sequence belongs to the polyphosphate kinase 1 (PPK1) family. Mg(2+) is required as a cofactor. An intermediate of this reaction is the autophosphorylated ppk in which a phosphate is covalently linked to a histidine residue through a N-P bond.

The catalysed reaction is [phosphate](n) + ATP = [phosphate](n+1) + ADP. Its function is as follows. Catalyzes the reversible transfer of the terminal phosphate of ATP to form a long-chain polyphosphate (polyP). This chain is Polyphosphate kinase, found in Synechocystis sp. (strain ATCC 27184 / PCC 6803 / Kazusa).